The chain runs to 757 residues: Xaa-Pro dipeptidyl-peptidase (757 aa).

Residues serine 348, aspartate 468, and histidine 498 each act as charge relay system in the active site.

This sequence belongs to the peptidase S15 family. Homodimer.

It is found in the cytoplasm. The enzyme catalyses Hydrolyzes Xaa-Pro-|- bonds to release unblocked, N-terminal dipeptides from substrates including Ala-Pro-|-p-nitroanilide and (sequentially) Tyr-Pro-|-Phe-Pro-|-Gly-Pro-|-Ile.. Removes N-terminal dipeptides sequentially from polypeptides having unsubstituted N-termini provided that the penultimate residue is proline. The sequence is that of Xaa-Pro dipeptidyl-peptidase from Streptococcus pneumoniae (strain P1031).